We begin with the raw amino-acid sequence, 306 residues long: Low-density lipoprotein receptor class A domain-containing protein 4 (306 aa).

Over 1-64 (MPEAGFQATN…PPGIFNSELE (64 aa)) the chain is Lumenal. The LDL-receptor class A domain occupies 16–48 (KFTCTSGKCLYLGSLVCNQQNDCGDNSDEENCL). Disulfide bonds link cysteine 19-cysteine 38 and cysteine 32-cysteine 47. A helical membrane pass occupies residues 65–85 (FAQIIIIVVVVTVMVVVIVCL). At 86 to 306 (LNHYKVSTRS…GKDRKPGNLV (221 aa)) the chain is on the cytoplasmic side. Residues 180–183 (PPPY) carry the PPxY motif 1 motif. The SMAD interaction motif (SIM) motif lies at 208–211 (PPNR). The PPxY motif 2 motif lies at 252–255 (PPTY). The tract at residues 286 to 306 (NNAESTIVPIKGKDRKPGNLV) is disordered. A compositionally biased stretch (basic and acidic residues) spans 296-306 (KGKDRKPGNLV).

The protein belongs to the PMEPA1 family. Interacts with PMEPA1. Interacts (via the SMAD interaction motif) with SMAD2 and SMAD3. Expressed in lymphocytes.

The protein resides in the early endosome membrane. Functions as a negative regulator of TGF-beta signaling and thereby probably plays a role in cell proliferation, differentiation, apoptosis, motility, extracellular matrix production and immunosuppression. In the canonical TGF-beta pathway, ZFYVE9/SARA recruits the intracellular signal transducer and transcriptional modulators SMAD2 and SMAD3 to the TGF-beta receptor. Phosphorylated by the receptor, SMAD2 and SMAD3 then form a heteromeric complex with SMAD4 that translocates to the nucleus to regulate transcription. Through interaction with SMAD2 and SMAD3, LDLRAD4 may compete with ZFYVE9 and SMAD4 and prevent propagation of the intracellular signal. The chain is Low-density lipoprotein receptor class A domain-containing protein 4 (LDLRAD4) from Homo sapiens (Human).